The following is a 308-amino-acid chain: D-alanine--D-alanine ligase (308 aa).

The ATP-grasp domain occupies 104-301; it reads KQIWQGSDLP…FDELCVAILD (198 aa). 130 to 185 lines the ATP pocket; the sequence is IAELGLPVIIKPVHEGSSVGMSKVEKAEDFAAAIEKATQHDAVVMAEKWITGREFT. 3 residues coordinate Mg(2+): Asp255, Glu268, and Asn270.

It belongs to the D-alanine--D-alanine ligase family. Mg(2+) serves as cofactor. It depends on Mn(2+) as a cofactor.

It localises to the cytoplasm. The catalysed reaction is 2 D-alanine + ATP = D-alanyl-D-alanine + ADP + phosphate + H(+). It participates in cell wall biogenesis; peptidoglycan biosynthesis. In terms of biological role, cell wall formation. In Acinetobacter baumannii (strain AB307-0294), this protein is D-alanine--D-alanine ligase.